We begin with the raw amino-acid sequence, 284 residues long: Shikimate dehydrogenase (NADP(+)) (284 aa).

Shikimate-binding positions include 20-22 and Ser-67; that span reads SIS. Lys-71 (proton acceptor) is an active-site residue. Position 83 (Asp-83) interacts with NADP(+). Shikimate is bound by residues Asn-92 and Asp-107. NADP(+)-binding positions include 129–133 and Ile-227; that span reads GAGGA. Tyr-229 lines the shikimate pocket. Gly-250 is an NADP(+) binding site.

It belongs to the shikimate dehydrogenase family. Homodimer.

The catalysed reaction is shikimate + NADP(+) = 3-dehydroshikimate + NADPH + H(+). The protein operates within metabolic intermediate biosynthesis; chorismate biosynthesis; chorismate from D-erythrose 4-phosphate and phosphoenolpyruvate: step 4/7. Its function is as follows. Involved in the biosynthesis of the chorismate, which leads to the biosynthesis of aromatic amino acids. Catalyzes the reversible NADPH linked reduction of 3-dehydroshikimate (DHSA) to yield shikimate (SA). The sequence is that of Shikimate dehydrogenase (NADP(+)) from Streptococcus pneumoniae (strain 70585).